A 215-amino-acid polypeptide reads, in one-letter code: Probable GTP-binding protein EngB (215 aa).

One can recognise an EngB-type G domain in the interval 31-215 (GPPEIAFAGR…RTAILQAVVQ (185 aa)). GTP contacts are provided by residues 39–46 (GRSNVGKS), 66–70 (GRTQE), 93–96 (DMPG), 160–163 (TKSD), and 194–196 (TSA). The Mg(2+) site is built by serine 46 and threonine 68.

This sequence belongs to the TRAFAC class TrmE-Era-EngA-EngB-Septin-like GTPase superfamily. EngB GTPase family. Mg(2+) serves as cofactor.

Functionally, necessary for normal cell division and for the maintenance of normal septation. This chain is Probable GTP-binding protein EngB, found in Bartonella bacilliformis (strain ATCC 35685 / KC583 / Herrer 020/F12,63).